A 461-amino-acid chain; its full sequence is Cysteine--tRNA ligase (461 aa).

Cysteine 28 contributes to the Zn(2+) binding site. The 'HIGH' region motif lies at 30–40 (ITIYDLCHIGH). Positions 209, 234, and 238 each coordinate Zn(2+). The short motif at 266–270 (KMSKS) is the 'KMSKS' region element. Lysine 269 lines the ATP pocket.

This sequence belongs to the class-I aminoacyl-tRNA synthetase family. Monomer. Zn(2+) is required as a cofactor.

It is found in the cytoplasm. It carries out the reaction tRNA(Cys) + L-cysteine + ATP = L-cysteinyl-tRNA(Cys) + AMP + diphosphate. The chain is Cysteine--tRNA ligase from Yersinia pseudotuberculosis serotype IB (strain PB1/+).